We begin with the raw amino-acid sequence, 298 residues long: N-acetylmuramic acid 6-phosphate etherase (298 aa).

Residues 54–217 form the SIS domain; it reads TIKAMKQGGR…STTVMIGLGK (164 aa). The active-site Proton donor is the glutamate 82. Residue glutamate 113 is part of the active site.

Belongs to the GCKR-like family. MurNAc-6-P etherase subfamily. As to quaternary structure, homodimer.

The catalysed reaction is N-acetyl-D-muramate 6-phosphate + H2O = N-acetyl-D-glucosamine 6-phosphate + (R)-lactate. Its pathway is amino-sugar metabolism; N-acetylmuramate degradation. Specifically catalyzes the cleavage of the D-lactyl ether substituent of MurNAc 6-phosphate, producing GlcNAc 6-phosphate and D-lactate. This is N-acetylmuramic acid 6-phosphate etherase from Halalkalibacterium halodurans (strain ATCC BAA-125 / DSM 18197 / FERM 7344 / JCM 9153 / C-125) (Bacillus halodurans).